We begin with the raw amino-acid sequence, 198 residues long: dTTP/UTP pyrophosphatase (198 aa).

D75 (proton acceptor) is an active-site residue.

Belongs to the Maf family. YhdE subfamily. A divalent metal cation serves as cofactor.

It is found in the cytoplasm. The catalysed reaction is dTTP + H2O = dTMP + diphosphate + H(+). The enzyme catalyses UTP + H2O = UMP + diphosphate + H(+). In terms of biological role, nucleoside triphosphate pyrophosphatase that hydrolyzes dTTP and UTP. May have a dual role in cell division arrest and in preventing the incorporation of modified nucleotides into cellular nucleic acids. In Wolbachia sp. subsp. Drosophila simulans (strain wRi), this protein is dTTP/UTP pyrophosphatase.